A 527-amino-acid polypeptide reads, in one-letter code: Lysine--tRNA ligase (527 aa).

Positions 44–52 (PSGLPHIGT) match the 'HIGH' region motif. The short motif at 290-294 (KISKS) is the 'KMSKS' region element. Position 293 (lysine 293) interacts with ATP.

It belongs to the class-I aminoacyl-tRNA synthetase family.

It localises to the cytoplasm. It catalyses the reaction tRNA(Lys) + L-lysine + ATP = L-lysyl-tRNA(Lys) + AMP + diphosphate. The sequence is that of Lysine--tRNA ligase from Roseobacter denitrificans (strain ATCC 33942 / OCh 114) (Erythrobacter sp. (strain OCh 114)).